The chain runs to 317 residues: MKWIEVSIKTTSEAVEAVANILYDGGVAGVSIEDENDFSLLEQSNEAWDYVDEALLDRELEGALVKGYLPEAADLAYKLELIRQSVALLPKYGLNIGLGEVTTLEVNEEDWSHSWKKYYKPTHIGKNIVVKPTWEEYERKEGEMIIEMDPGMAFGTGTHETTMMCAQELEKIVGAKYTVFDIGCGSGILSIVAAKLGAEKVIAVDLDGTAIRVTQENVDANDVSDIVEVRHGNLMDVVTSRADVIVANIIADIIILLSKDVKNFLKKEGIFIASGIILDKVEVVKAQLIANNLEIVKVETMGEWAVIISKLKGGVDE.

Residues Thr-162, Gly-183, Asp-205, and Asn-248 each contribute to the S-adenosyl-L-methionine site.

Belongs to the methyltransferase superfamily. PrmA family.

Its subcellular location is the cytoplasm. The enzyme catalyses L-lysyl-[protein] + 3 S-adenosyl-L-methionine = N(6),N(6),N(6)-trimethyl-L-lysyl-[protein] + 3 S-adenosyl-L-homocysteine + 3 H(+). Functionally, methylates ribosomal protein L11. This chain is Ribosomal protein L11 methyltransferase, found in Alkaliphilus metalliredigens (strain QYMF).